The chain runs to 140 residues: Ribosome maturation factor RimP (140 aa).

The protein belongs to the RimP family.

The protein localises to the cytoplasm. In terms of biological role, required for maturation of 30S ribosomal subunits. The protein is Ribosome maturation factor RimP of Campylobacter jejuni subsp. doylei (strain ATCC BAA-1458 / RM4099 / 269.97).